A 115-amino-acid chain; its full sequence is U3-lycotoxin-Ls1e (115 aa).

Residues 1 to 20 (MKFVLLFGVLSLTLFSYSSA) form the signal peptide. A propeptide spanning residues 21 to 44 (EMLDDFDQADEDELLSLIEKEEAR) is cleaved from the precursor. Disulfide bonds link C48–C63, C55–C72, C62–C87, and C74–C85.

Belongs to the neurotoxin 19 (CSTX) family. 01 subfamily. In terms of tissue distribution, expressed by the venom gland.

Its subcellular location is the secreted. The sequence is that of U3-lycotoxin-Ls1e from Lycosa singoriensis (Wolf spider).